A 429-amino-acid chain; its full sequence is Phosphoribosylamine--glycine ligase (429 aa).

The ATP-grasp domain maps to 109–316 (KDFLARHNIP…LVELCQAAIA (208 aa)). 135 to 196 (VREKGAPIVV…EEFLDGEEAS (62 aa)) is a binding site for ATP. Residues Glu-286 and Asn-288 each coordinate Mg(2+).

The protein belongs to the GARS family. It depends on Mg(2+) as a cofactor. The cofactor is Mn(2+).

The enzyme catalyses 5-phospho-beta-D-ribosylamine + glycine + ATP = N(1)-(5-phospho-beta-D-ribosyl)glycinamide + ADP + phosphate + H(+). Its pathway is purine metabolism; IMP biosynthesis via de novo pathway; N(1)-(5-phospho-D-ribosyl)glycinamide from 5-phospho-alpha-D-ribose 1-diphosphate: step 2/2. This is Phosphoribosylamine--glycine ligase from Vibrio cholerae serotype O1 (strain ATCC 39315 / El Tor Inaba N16961).